A 389-amino-acid chain; its full sequence is S-adenosylmethionine synthase (389 aa).

H17 lines the ATP pocket. D19 is a binding site for Mg(2+). E45 contacts K(+). Positions 58 and 101 each coordinate L-methionine. The interval 101–111 (QSPDIGQGVDV) is flexible loop. Residues 160 to 162 (DGK), 226 to 227 (RF), D235, 241 to 242 (RK), A258, and K262 contribute to the ATP site. D235 provides a ligand contact to L-methionine. L-methionine is bound at residue K266.

This sequence belongs to the AdoMet synthase family. In terms of assembly, homotetramer; dimer of dimers. Mg(2+) is required as a cofactor. K(+) serves as cofactor.

It is found in the cytoplasm. The catalysed reaction is L-methionine + ATP + H2O = S-adenosyl-L-methionine + phosphate + diphosphate. The protein operates within amino-acid biosynthesis; S-adenosyl-L-methionine biosynthesis; S-adenosyl-L-methionine from L-methionine: step 1/1. Its function is as follows. Catalyzes the formation of S-adenosylmethionine (AdoMet) from methionine and ATP. The overall synthetic reaction is composed of two sequential steps, AdoMet formation and the subsequent tripolyphosphate hydrolysis which occurs prior to release of AdoMet from the enzyme. This Anaeromyxobacter sp. (strain Fw109-5) protein is S-adenosylmethionine synthase.